Reading from the N-terminus, the 24-residue chain is Humanin (24 aa).

The sufficient to interact with BID and BIM and to suppress BID and BIM activity stretch occupies residues 1–12; that stretch reads MAPRGFSCLLLL. Positions 3–19 are sufficient for neuroprotective activity; that stretch reads PRGFSCLLLLTSEIDLP. Positions 5–12 are sufficient to interact with MPP8; it reads GFSCLLLL. Required for secretion stretches follow at residues 9–11 and 19–20; these read LLL and PV.

Homodimer. Interacts with amyloid-beta protein 42 (Abeta42); the interaction prevents Abeta42 fibril formation. Interacts with BAX; forms fibers with BAX which results in BAX conformational changes and sequestering of BAX into the fibers, preventing BAX activation. Interacts with both full-length BID and cleaved BID p15; forms fibers with BID which results in BID conformational changes and sequestering of BID into the fibers, preventing BID activation. Interacts with BIM isoform BimEL but not with BIM isoforms BimL or BimS; the interaction prevents BIM-induced apoptosis. Interacts with IGFBP3; competes with importin KPNB1 for binding to IGFBP3, blocking IGFBP3 nuclear import. Interacts with TRIM11. Interacts with MPP8. As to expression, expressed in testis, seminal plasma and sperm (at protein level). Higher seminal plasma levels are associated with normospermia than with oligospermia, asthenospermia or oligoasthenospermia (at protein level). Higher sperm levels are associated with normospermia than with asthenospermia (at protein level). Expressed in retinal epithelial cells (at protein level). Expressed in the heart, skeletal muscle, kidney and liver. Lesser but significant expression is observed in the brain and the gastrointestinal tract. Expressed in the AD brain, where it is found in some of the large intact neurons of the occipital lobes and small and round reactive glial cells in the hippocampus.

It localises to the secreted. The protein localises to the cytoplasm. Its subcellular location is the cell projection. It is found in the cilium. The protein resides in the flagellum. It localises to the nucleus. The protein localises to the mitochondrion. Plays a role as a neuroprotective factor. Protects against neuronal cell death induced by multiple different familial Alzheimer disease genes and amyloid-beta proteins in Alzheimer disease. Mediates its neuroprotective effect by interacting with a receptor complex composed of IL6ST/GP130, IL27RA/WSX1 and CNTFR. Also acts as a ligand for G-protein coupled receptors FPR2/FPRL1 and FPR3/FPRL2. Inhibits amyloid-beta protein 40 fibril formation. Also inhibits amyloid-beta protein 42 fibril formation. Suppresses apoptosis by binding to BAX and preventing the translocation of BAX from the cytosol to mitochondria. Also suppresses apoptosis by binding to BID and inhibiting the interaction of BID with BAX and BAK which prevents oligomerization of BAX and BAK and suppresses release of apoptogenic proteins from mitochondria. Forms fibers with BAX and also with BID, inducing BAX and BID conformational changes and sequestering them into the fibers which prevents their activation. Can also suppress apoptosis by interacting with BIM isoform BimEL, inhibiting BimEL-induced activation of BAX, blocking oligomerization of BAX and BAK, and preventing release of apoptogenic proteins from mitochondria. Plays a role in up-regulation of anti-apoptotic protein BIRC6/APOLLON, leading to inhibition of neuronal cell death. Binds to IGFBP3 and specifically blocks IGFBP3-induced cell death. Competes with importin KPNB1 for binding to IGFBP3 which is likely to block IGFBP3 nuclear import. Induces chemotaxis of mononuclear phagocytes via FPR2/FPRL1. Reduces aggregation and fibrillary formation by suppressing the effect of APP on mononuclear phagocytes and acts by competitively inhibiting the access of FPR2 to APP. Protects retinal pigment epithelium (RPE) cells against oxidative stress-induced and endoplasmic reticulum (ER) stress-induced apoptosis. Promotes mitochondrial biogenesis in RPE cells following oxidative stress and promotes STAT3 phosphorylation which leads to inhibition of CASP3 release. Also reduces CASP4 levels in RPE cells, suppresses ER stress-induced mitochondrial superoxide production and plays a role in up-regulation of mitochondrial glutathione. Reduces testicular hormone deprivation-induced apoptosis of germ cells at the nonandrogen-sensitive stages of the seminiferous epithelium cycle. Protects endothelial cells against free fatty acid-induced inflammation by suppressing oxidative stress, reducing expression of TXNIP and inhibiting activation of the NLRP3 inflammasome which inhibits expression of pro-inflammatory cytokines IL1B and IL18. Protects against high glucose-induced endothelial cell dysfunction by mediating activation of ERK5 which leads to increased expression of transcription factor KLF2 and prevents monocyte adhesion to endothelial cells. Inhibits the inflammatory response in astrocytes. Increases the expression of PPARGC1A/PGC1A in pancreatic beta cells which promotes mitochondrial biogenesis. Increases insulin sensitivity. The sequence is that of Humanin from Homo sapiens (Human).